A 355-amino-acid chain; its full sequence is Uroporphyrinogen decarboxylase (355 aa).

Residues Arg-36 to Arg-40, Asp-85, Tyr-160, Ser-215, and His-334 each bind substrate.

This sequence belongs to the uroporphyrinogen decarboxylase family. In terms of assembly, homodimer.

It localises to the cytoplasm. The catalysed reaction is uroporphyrinogen III + 4 H(+) = coproporphyrinogen III + 4 CO2. It participates in porphyrin-containing compound metabolism; protoporphyrin-IX biosynthesis; coproporphyrinogen-III from 5-aminolevulinate: step 4/4. Catalyzes the decarboxylation of four acetate groups of uroporphyrinogen-III to yield coproporphyrinogen-III. The chain is Uroporphyrinogen decarboxylase from Rhodococcus jostii (strain RHA1).